Reading from the N-terminus, the 360-residue chain is Phospho-N-acetylmuramoyl-pentapeptide-transferase (360 aa).

10 helical membrane passes run 25–45 (RGIL…PWMI), 73–93 (TMGG…WADL), 97–117 (YVWV…VDDY), 132–152 (WKYF…YMTA), 168–188 (VSIP…VGSS), 199–219 (GLAI…CYLS), 236–256 (AGEL…FLWF), 263–283 (VFMG…IAVI), 288–308 (IVLF…VIQV), and 338–358 (VIVR…ATLK).

This sequence belongs to the glycosyltransferase 4 family. MraY subfamily. Requires Mg(2+) as cofactor.

The protein localises to the cell inner membrane. It carries out the reaction UDP-N-acetyl-alpha-D-muramoyl-L-alanyl-gamma-D-glutamyl-meso-2,6-diaminopimeloyl-D-alanyl-D-alanine + di-trans,octa-cis-undecaprenyl phosphate = di-trans,octa-cis-undecaprenyl diphospho-N-acetyl-alpha-D-muramoyl-L-alanyl-D-glutamyl-meso-2,6-diaminopimeloyl-D-alanyl-D-alanine + UMP. The protein operates within cell wall biogenesis; peptidoglycan biosynthesis. In terms of biological role, catalyzes the initial step of the lipid cycle reactions in the biosynthesis of the cell wall peptidoglycan: transfers peptidoglycan precursor phospho-MurNAc-pentapeptide from UDP-MurNAc-pentapeptide onto the lipid carrier undecaprenyl phosphate, yielding undecaprenyl-pyrophosphoryl-MurNAc-pentapeptide, known as lipid I. This Pseudomonas fluorescens (strain ATCC BAA-477 / NRRL B-23932 / Pf-5) protein is Phospho-N-acetylmuramoyl-pentapeptide-transferase.